Here is a 191-residue protein sequence, read N- to C-terminus: Calcium-binding protein L (191 aa).

G2 is lipidated: N-myristoyl glycine. EF-hand domains are found at residues 25–59, 60–95, and 96–131; these read EQVSQILKDYQSVNQDSKGLSLEEFKSFFSIRFKD, YDDASILHMFKIFDSDKNGRISFKEFVGALFIITKS, and PVSDKLSFLFDMFDRDLNGYLDLEESYNILKLALNT. Ca(2+)-binding residues include D73, D75, N77, R79, and E84.

This sequence belongs to the recoverin family.

This Dictyostelium discoideum (Social amoeba) protein is Calcium-binding protein L (cbpL).